The sequence spans 513 residues: ATP synthase subunit alpha (513 aa).

169 to 176 lines the ATP pocket; that stretch reads GDRQTGKT.

The protein belongs to the ATPase alpha/beta chains family. F-type ATPases have 2 components, CF(1) - the catalytic core - and CF(0) - the membrane proton channel. CF(1) has five subunits: alpha(3), beta(3), gamma(1), delta(1), epsilon(1). CF(0) has three main subunits: a(1), b(2) and c(9-12). The alpha and beta chains form an alternating ring which encloses part of the gamma chain. CF(1) is attached to CF(0) by a central stalk formed by the gamma and epsilon chains, while a peripheral stalk is formed by the delta and b chains.

The protein localises to the cell inner membrane. The catalysed reaction is ATP + H2O + 4 H(+)(in) = ADP + phosphate + 5 H(+)(out). Functionally, produces ATP from ADP in the presence of a proton gradient across the membrane. The alpha chain is a regulatory subunit. The polypeptide is ATP synthase subunit alpha (Histophilus somni (strain 2336) (Haemophilus somnus)).